Consider the following 319-residue polypeptide: Dehydrogenase/reductase SDR family member 9 (319 aa).

An N-terminal signal peptide occupies residues 1–17 (MLFWVLGLLILCGFLWT). NAD(+) is bound by residues 34–58 (ITGC…HVIA) and D83. Residue S164 coordinates substrate. Y176 (proton acceptor) is an active-site residue. K180 contacts NAD(+).

This sequence belongs to the short-chain dehydrogenases/reductases (SDR) family. As to quaternary structure, homotetramer. In terms of tissue distribution, highly expressed in trachea and epidermis. Detected at lower levels in spinal cord, bone marrow, brain, tongue, esophagus, heart, colon, testis, placenta, lung, skeletal muscle and lymph node.

Its subcellular location is the microsome membrane. It localises to the endoplasmic reticulum membrane. The enzyme catalyses 3beta-hydroxy-5alpha-pregnane-20-one + NAD(+) = 5alpha-pregnane-3,20-dione + NADH + H(+). It carries out the reaction 17beta-hydroxy-5alpha-androstan-3-one + NAD(+) = 5alpha-androstan-3,17-dione + NADH + H(+). The catalysed reaction is androsterone + NAD(+) = 5alpha-androstan-3,17-dione + NADH + H(+). It catalyses the reaction 5alpha-androstane-3alpha,17beta-diol + NAD(+) = 17beta-hydroxy-5alpha-androstan-3-one + NADH + H(+). The enzyme catalyses all-trans-retinol + NAD(+) = all-trans-retinal + NADH + H(+). It carries out the reaction 3alpha-hydroxy-5alpha-pregnan-20-one + NAD(+) = 5alpha-pregnane-3,20-dione + NADH + H(+). 3-alpha-hydroxysteroid dehydrogenase that converts 3-alpha-tetrahydroprogesterone (allopregnanolone) to dihydroxyprogesterone and 3-alpha-androstanediol to dihydroxyprogesterone. Also plays a role in the biosynthesis of retinoic acid from retinaldehyde. Can utilize both NADH and NADPH. The sequence is that of Dehydrogenase/reductase SDR family member 9 (DHRS9) from Homo sapiens (Human).